A 626-amino-acid chain; its full sequence is MILPNYLISKILNYLIFHEYQYEINYISLDKNYFDNNYYICEHFPASHILSYGLVCKELFEIVSSLITITSRLSFKCPRHSKFCIVQSKNITRFIEEHRPSYKTKSERDSIKSSLLKENNYGERYRTIQELLDIYPNLKELVYNINLLIFSDFNELRFWDEKFFEQFNSEFLKSTTSSNVKIKIRILLYCEPNSNIKTISTKKSILKFKNDIENSNKKVQVDLLYLKGLDSNMENQDDIFQLINNLTPKKLIIVNEKKILNGELQEIQDKNSGDGGGGGFFSHSSYLKVLQINNIKKIKIIKDFMDPFVFIGIENNIQLKSVDIGFHFHEILFHMIRLFKPVNKNNSSHLIENCKNLKKYISNSDFSFLDKDDFYCFKSICNADEEVIQPIQSIFRVSHCIKDWEEMCHSISISTTLKDLKIKEFCNKLHCQIWKSISSYSNKKSDGITDDGDDVGDRVDCCSHDKIHYRDCINGNEVMNKIPFFTDPFSLMISNNKSIETLHLEGMNGLLNETVLSSFIKNKSIKKLSLNYSLSHSNLDYFLTNVMPRNTTIKHLEIVLTDKLWCDKNTCCPNSLANFIQTNTTLSTLKCQFFDTIIDDSNDGAKKLTFESLINSSKIQKINIST.

This is an uncharacterized protein from Dictyostelium discoideum (Social amoeba).